The following is a 445-amino-acid chain: Tubulin beta chain (445 aa).

Residues Gln11, Glu69, Ser138, Gly142, Thr143, Gly144, Asn204, and Asn226 each coordinate GTP. Glu69 contributes to the Mg(2+) binding site.

Belongs to the tubulin family. Dimer of alpha and beta chains. A typical microtubule is a hollow water-filled tube with an outer diameter of 25 nm and an inner diameter of 15 nM. Alpha-beta heterodimers associate head-to-tail to form protofilaments running lengthwise along the microtubule wall with the beta-tubulin subunit facing the microtubule plus end conferring a structural polarity. Microtubules usually have 13 protofilaments but different protofilament numbers can be found in some organisms and specialized cells. Mg(2+) serves as cofactor.

It localises to the cytoplasm. Its subcellular location is the cytoskeleton. Functionally, tubulin is the major constituent of microtubules, a cylinder consisting of laterally associated linear protofilaments composed of alpha- and beta-tubulin heterodimers. Microtubules grow by the addition of GTP-tubulin dimers to the microtubule end, where a stabilizing cap forms. Below the cap, tubulin dimers are in GDP-bound state, owing to GTPase activity of alpha-tubulin. The chain is Tubulin beta chain (TUB-2) from Schizophyllum commune (Split gill fungus).